Reading from the N-terminus, the 142-residue chain is Large ribosomal subunit protein uL13 (142 aa).

It belongs to the universal ribosomal protein uL13 family. Part of the 50S ribosomal subunit.

This protein is one of the early assembly proteins of the 50S ribosomal subunit, although it is not seen to bind rRNA by itself. It is important during the early stages of 50S assembly. The sequence is that of Large ribosomal subunit protein uL13 from Glaesserella parasuis serovar 5 (strain SH0165) (Haemophilus parasuis).